We begin with the raw amino-acid sequence, 286 residues long: Probable ketoamine kinase YniA (286 aa).

91-93 is a binding site for ATP; it reads DYL. Residue Asp193 is the Proton acceptor of the active site.

Belongs to the fructosamine kinase family.

Functionally, ketoamine kinase that phosphorylates ketoamines on the third carbon of the sugar moiety to generate ketoamine 3-phosphate. Its precise substrate are unknown: does not have ribulosamine and/or erythrulosamine 3-kinase activity in vitro. The chain is Probable ketoamine kinase YniA (yniA) from Escherichia coli (strain K12).